Here is a 426-residue protein sequence, read N- to C-terminus: Pyrophosphate--fructose 6-phosphate 1-phosphotransferase 2 (426 aa).

Diphosphate is bound at residue Gly15. A Mg(2+)-binding site is contributed by Asp114. Residues 140 to 142 (TID), 186 to 188 (MGR), Glu247, and 308 to 311 (YELR) each bind substrate. The active-site Proton acceptor is Asp142.

Belongs to the phosphofructokinase type A (PFKA) family. PPi-dependent PFK group II subfamily. Clade 'Short' sub-subfamily. Homotetramer. Requires Mg(2+) as cofactor.

The protein resides in the cytoplasm. The catalysed reaction is beta-D-fructose 6-phosphate + diphosphate = beta-D-fructose 1,6-bisphosphate + phosphate + H(+). The protein operates within carbohydrate degradation; glycolysis; D-glyceraldehyde 3-phosphate and glycerone phosphate from D-glucose: step 3/4. Non-allosteric. Functionally, catalyzes the phosphorylation of D-fructose 6-phosphate, the first committing step of glycolysis. Uses inorganic phosphate (PPi) as phosphoryl donor instead of ATP like common ATP-dependent phosphofructokinases (ATP-PFKs), which renders the reaction reversible, and can thus function both in glycolysis and gluconeogenesis. Consistently, PPi-PFK can replace the enzymes of both the forward (ATP-PFK) and reverse (fructose-bisphosphatase (FBPase)) reactions. The chain is Pyrophosphate--fructose 6-phosphate 1-phosphotransferase 2 (pfk2) from Trichomonas vaginalis (strain ATCC PRA-98 / G3).